A 357-amino-acid chain; its full sequence is NADH-quinone oxidoreductase subunit H (357 aa).

A run of 8 helical transmembrane segments spans residues 18 to 38, 92 to 112, 127 to 147, 165 to 185, 206 to 226, 268 to 288, 294 to 314, and 329 to 349; these read VAWM…PIIL, VLFV…WAVV, LLYI…AGWA, VSYE…SGSL, FLSW…ISAV, ILLS…PIDI, IPGW…FVWF, and LGWK…AIWM.

The protein belongs to the complex I subunit 1 family. In terms of assembly, NDH-1 is composed of 14 different subunits. Subunits NuoA, H, J, K, L, M, N constitute the membrane sector of the complex.

It localises to the cell inner membrane. The catalysed reaction is a quinone + NADH + 5 H(+)(in) = a quinol + NAD(+) + 4 H(+)(out). Its function is as follows. NDH-1 shuttles electrons from NADH, via FMN and iron-sulfur (Fe-S) centers, to quinones in the respiratory chain. The immediate electron acceptor for the enzyme in this species is believed to be ubiquinone. Couples the redox reaction to proton translocation (for every two electrons transferred, four hydrogen ions are translocated across the cytoplasmic membrane), and thus conserves the redox energy in a proton gradient. This subunit may bind ubiquinone. This Bordetella bronchiseptica (strain ATCC BAA-588 / NCTC 13252 / RB50) (Alcaligenes bronchisepticus) protein is NADH-quinone oxidoreductase subunit H.